A 150-amino-acid polypeptide reads, in one-letter code: Centrin-B (150 aa).

EF-hand domains follow at residues 12 to 46, 80 to 114, and 115 to 150; these read DQISEIKESFDMFKSDNGKLDNDQIKYAFKALGCE, DSMSTLEQAFKLFVKDGSGITFKDLKKVAINIGEE, and CSDSDLYDMIEFADTDGDGVINKSEFISLMTTKKVL. Ca(2+)-binding residues include D128, D130, D132, and E139.

This sequence belongs to the centrin family.

Its subcellular location is the cytoplasm. It is found in the cytoskeleton. The protein localises to the microtubule organizing center. It localises to the centrosome. Plays a fundamental role in microtubule-organizing center structure and function. The sequence is that of Centrin-B (cenB) from Dictyostelium discoideum (Social amoeba).